Consider the following 226-residue polypeptide: Endonuclease NucS (226 aa).

It belongs to the NucS endonuclease family.

The protein localises to the cytoplasm. Its function is as follows. Cleaves both 3' and 5' ssDNA extremities of branched DNA structures. The polypeptide is Endonuclease NucS (Mycobacterium ulcerans (strain Agy99)).